We begin with the raw amino-acid sequence, 538 residues long: Anti-bacteriophage protein A (538 aa).

In terms of assembly, interacts with AbpB.

Its function is as follows. Part of an antiviral system composed of AbpA and AbpB; when both are expressed from a plasmid they confer resistance to phages T2, T4, T7 and lambda but not RB32 or RB69. Resistance is temperature dependent, it can be seen at 30 degrees Celsius but not at 37 or 42 degrees Celsius. The system impairs phage but not bacterial DNA synthesis (shown for T4, T7 and lambda). Partially suppressed by mutations in T4 gene 41, a replicative helicase. This Escherichia coli (strain K12) protein is Anti-bacteriophage protein A.